Consider the following 379-residue polypeptide: Phospho-N-acetylmuramoyl-pentapeptide-transferase (379 aa).

10 helical membrane-spanning segments follow: residues 27–47, 76–96, 100–120, 135–155, 185–205, 218–238, 255–275, 283–303, 307–327, and 356–376; these read FRTA…GPAV, TMGG…WADL, FVWI…TDDY, AKMG…VLVQ, PHIW…VLVG, GLAI…TYVS, VGEL…FLWY, FMGD…AVII, LLLP…ILQV, and KIIV…LTTL.

Belongs to the glycosyltransferase 4 family. MraY subfamily. It depends on Mg(2+) as a cofactor.

The protein localises to the cell inner membrane. The enzyme catalyses UDP-N-acetyl-alpha-D-muramoyl-L-alanyl-gamma-D-glutamyl-meso-2,6-diaminopimeloyl-D-alanyl-D-alanine + di-trans,octa-cis-undecaprenyl phosphate = di-trans,octa-cis-undecaprenyl diphospho-N-acetyl-alpha-D-muramoyl-L-alanyl-D-glutamyl-meso-2,6-diaminopimeloyl-D-alanyl-D-alanine + UMP. Its pathway is cell wall biogenesis; peptidoglycan biosynthesis. In terms of biological role, catalyzes the initial step of the lipid cycle reactions in the biosynthesis of the cell wall peptidoglycan: transfers peptidoglycan precursor phospho-MurNAc-pentapeptide from UDP-MurNAc-pentapeptide onto the lipid carrier undecaprenyl phosphate, yielding undecaprenyl-pyrophosphoryl-MurNAc-pentapeptide, known as lipid I. This chain is Phospho-N-acetylmuramoyl-pentapeptide-transferase, found in Koribacter versatilis (strain Ellin345).